Consider the following 69-residue polypeptide: Large ribosomal subunit protein bL31 (69 aa).

The Zn(2+) site is built by C16, C18, C37, and C40.

This sequence belongs to the bacterial ribosomal protein bL31 family. Type A subfamily. Part of the 50S ribosomal subunit. Requires Zn(2+) as cofactor.

Its function is as follows. Binds the 23S rRNA. The protein is Large ribosomal subunit protein bL31 of Buchnera aphidicola subsp. Baizongia pistaciae (strain Bp).